Reading from the N-terminus, the 507-residue chain is MTAQSPYLSFHGIGKEFPGVKALSDISFSCHAGQIHALMGENGAGKSTLLKILSGNYSPSAGEIHIQGKPVQFSNTMDALNAGVAIIYQELHLVPEMTVAENIYLGQLPHKYGMVNYSLLRYEAKLQLQHLGLDIDPDTPLKYLSIGQWQMVEIAKALARNAKIIAFDEPTSSLSAREIEQLFRVITELRSEGRIILYVSHRMEEIFALSDAITVFKDGRYVCTFDDMQQVNHESLVQAMVGRNLGNIYGYAPRPHGEDRLTLKDVKAPGVKSTISLNVKQGEIVGLFGLVGAGRSELMKGLFGATKITSGQVLLDGKPLVVNSPIDAIRQGVMLCPEDRKADGIIPVHSVRDNINISARRKSLKAGFIINNQWEADNAAQRIDALNIKTPSDEQLIMNLSGGNQQKVILGRWLSEEMKVILLDEPTRGIDVGAKHEIYHVIYELANQGIAVLFASSDLPEVLGLADRIIVMREGAVSGELLHADATEQKVLSLAMLRIPDIESAVA.

ABC transporter domains follow at residues 8–243 and 255–499; these read LSFH…MVGR and PHGE…MLRI. An ATP-binding site is contributed by 40 to 47; that stretch reads GENGAGKS.

The protein belongs to the ABC transporter superfamily. Arabinose importer (TC 3.A.1.2.2) family. The complex is composed of two ATP-binding proteins (AraG), two transmembrane proteins (AraH) and a solute-binding protein (AraF).

It is found in the cell inner membrane. It carries out the reaction L-arabinose(out) + ATP + H2O = L-arabinose(in) + ADP + phosphate + H(+). Part of the ABC transporter complex AraFGH involved in arabinose import. Responsible for energy coupling to the transport system. The protein is Arabinose import ATP-binding protein AraG of Pectobacterium atrosepticum (strain SCRI 1043 / ATCC BAA-672) (Erwinia carotovora subsp. atroseptica).